Reading from the N-terminus, the 706-residue chain is ABC transporter D family member 2, chloroplastic (706 aa).

The transit peptide at 1 to 44 (MILMITAPVCPPHLLLRHSSLLRHESSIGNFHRKKNPRFRTVSC) directs the protein to the chloroplast. S45 carries the post-translational modification N-acetylserine. 5 consecutive transmembrane segments (helical) span residues 88–108 (LAAV…FNFL), 124–144 (FTKQ…FFVL), 200–222 (TALS…SNIL), 237–257 (SFGG…LNFL), and 326–346 (ILPV…FGVI). The region spanning 88–372 (LAAVFALTLA…VVYQFQAISS (285 aa)) is the ABC transmembrane type-1 domain. In terms of domain architecture, ABC transporter spans 430–697 (LEIEELTLQT…DAQDSLYGRL (268 aa)). Residue 464–471 (GPSGSGKT) participates in ATP binding. Positions 545–569 (TTPGGSNIDGSPPLLIREDGNEKPT) are disordered. The span at 560-569 (IREDGNEKPT) shows a compositional bias: basic and acidic residues.

This sequence belongs to the ABC transporter superfamily. ABCD family. Peroxisomal fatty acyl CoA transporter (TC 3.A.1.203) subfamily. As to quaternary structure, homodimer or heterodimer.

It is found in the membrane. It localises to the plastid. The protein resides in the chloroplast. This chain is ABC transporter D family member 2, chloroplastic (ABCC2), found in Arabidopsis thaliana (Mouse-ear cress).